The following is an 87-amino-acid chain: Small ribosomal subunit protein uS17 (87 aa).

The protein belongs to the universal ribosomal protein uS17 family. As to quaternary structure, part of the 30S ribosomal subunit.

One of the primary rRNA binding proteins, it binds specifically to the 5'-end of 16S ribosomal RNA. This Dichelobacter nodosus (strain VCS1703A) protein is Small ribosomal subunit protein uS17.